The primary structure comprises 411 residues: Exodeoxyribonuclease 7 large subunit (411 aa).

The protein belongs to the XseA family. In terms of assembly, heterooligomer composed of large and small subunits.

Its subcellular location is the cytoplasm. The enzyme catalyses Exonucleolytic cleavage in either 5'- to 3'- or 3'- to 5'-direction to yield nucleoside 5'-phosphates.. Bidirectionally degrades single-stranded DNA into large acid-insoluble oligonucleotides, which are then degraded further into small acid-soluble oligonucleotides. This chain is Exodeoxyribonuclease 7 large subunit, found in Mycobacterium sp. (strain KMS).